A 202-amino-acid polypeptide reads, in one-letter code: Syndecan-2 (202 aa).

Positions 1–18 (MQRAWILLTLGLMACVSA) are cleaved as a signal peptide. Topologically, residues 19–145 (ETRTELTSDK…HSDNLFKRTE (127 aa)) are extracellular. Serine 41, serine 55, and serine 57 each carry an O-linked (Xyl...) (glycosaminoglycan) serine glycan. Disordered stretches follow at residues 41-63 (SGVYPIDDDDYSSASGSGADEDI) and 88-118 (ETMTLKTQSITPAQTESPEETDKEEVDISEA). Positions 91 to 103 (TLKTQSITPAQTE) are enriched in polar residues. Acidic residues predominate over residues 104–117 (SPEETDKEEVDISE). Serine 116 carries the post-translational modification Phosphoserine. A helical transmembrane segment spans residues 146 to 170 (VLAAVIAGGVIGFLFAIFLILLLVY). Over 171 to 202 (RMRKKDEGSYDLGERKPSSAAYQKAPTKEFYA) the chain is Cytoplasmic. A disordered region spans residues 179-202 (SYDLGERKPSSAAYQKAPTKEFYA). The residue at position 188 (serine 188) is a Phosphoserine.

This sequence belongs to the syndecan proteoglycan family. Interacts (via cytoplasmic domain) with SARM1. Forms a complex with SDCBP and PDCD6IP. Post-translationally, O-glycosylated; contains both heparan sulfate and chondroitin sulfate. In terms of processing, phosphorylated on serine residues. In terms of tissue distribution, preferential expression in cells of mesenchymal origin.

It is found in the membrane. Its function is as follows. Cell surface proteoglycan which regulates dendritic arbor morphogenesis. This Mus musculus (Mouse) protein is Syndecan-2 (Sdc2).